The chain runs to 61 residues: uncharacterized protein (61 aa).

A coiled-coil region spans residues 10–61 (YEEENDNEDFEEEVELSREDLNQIINELAPFLIKLLTDLTELTQKKEESENE).

This is an uncharacterized protein from Acidianus bottle-shaped virus (isolate Italy/Pozzuoli) (ABV).